Here is a 361-residue protein sequence, read N- to C-terminus: Neuronal-specific septin-3 (361 aa).

Residues 1–46 (MSEIVPPEVRPKPAVPAKPSHVAPPSSAPFVPSPQGTGGEGQGSGR) are disordered. Over residues 15–34 (VPAKPSHVAPPSSAPFVPSP) the composition is skewed to low complexity. Gly residues predominate over residues 36 to 46 (GTGGEGQGSGR). A Septin-type G domain is found at 70-342 (AGFDFNIMVV…ETYRAKRLND (273 aa)). Residues 80–87 (GQSGLGKS) form a G1 motif region. Residues 80–87 (GQSGLGKS) and T114 contribute to the GTP site. A G3 motif region spans residues 137–140 (DTPG). The G4 motif stretch occupies residues 219–222 (AKSD). GTP contacts are provided by residues 220–228 (KSDTLTPEE), G276, and R291. The segment at 341-361 (NDNGGLHPISSSGHDTQESNL) is disordered. Residues 349–361 (ISSSGHDTQESNL) are compositionally biased toward polar residues.

Belongs to the TRAFAC class TrmE-Era-EngA-EngB-Septin-like GTPase superfamily. Septin GTPase family.

It localises to the cytoplasm. Its function is as follows. May be involved in cytokinesis. The protein is Neuronal-specific septin-3 of Danio rerio (Zebrafish).